The sequence spans 391 residues: Ferrochelatase (391 aa).

H196 and E281 together coordinate Fe cation.

It belongs to the ferrochelatase family.

Its subcellular location is the cytoplasm. It catalyses the reaction heme b + 2 H(+) = protoporphyrin IX + Fe(2+). The protein operates within porphyrin-containing compound metabolism; protoheme biosynthesis; protoheme from protoporphyrin-IX: step 1/1. Its function is as follows. Catalyzes the ferrous insertion into protoporphyrin IX. In Synechococcus sp. (strain CC9605), this protein is Ferrochelatase.